The sequence spans 284 residues: Cell wall mannoprotein 1 (284 aa).

The signal sequence occupies residues methionine 1 to alanine 17. The segment covering serine 176–threonine 234 has biased composition (low complexity). The disordered stretch occupies residues serine 176–threonine 252.

The protein belongs to the cell wall mannoprotein 1 family. Galactomannoprotein, glycosylated.

Its subcellular location is the secreted. The protein resides in the cell wall. Constitutive protein of the cell wall. Antigen target of host humoral immune response. This Aspergillus fumigatus (Neosartorya fumigata) protein is Cell wall mannoprotein 1.